Reading from the N-terminus, the 365-residue chain is Cobalt-precorrin-5B C(1)-methyltransferase (365 aa).

Belongs to the CbiD family.

The catalysed reaction is Co-precorrin-5B + S-adenosyl-L-methionine = Co-precorrin-6A + S-adenosyl-L-homocysteine. The protein operates within cofactor biosynthesis; adenosylcobalamin biosynthesis; cob(II)yrinate a,c-diamide from sirohydrochlorin (anaerobic route): step 6/10. Catalyzes the methylation of C-1 in cobalt-precorrin-5B to form cobalt-precorrin-6A. In Clostridium perfringens (strain SM101 / Type A), this protein is Cobalt-precorrin-5B C(1)-methyltransferase.